A 468-amino-acid polypeptide reads, in one-letter code: Fibrinogen beta chain (468 aa).

Pyrrolidone carboxylic acid is present on Gln1. Residues 1–10 are compositionally biased toward acidic residues; the sequence is QFPTDYDEGQ. The disordered stretch occupies residues 1 to 54; sequence QFPTDYDEGQDDRPKVGLGARGHRPYDKKKEEAPSLRPVPPPISGGGYRARPAT. A glycan (O-linked (GalNAc...) threonine) is linked at Thr4. Tyr6 bears the Sulfotyrosine mark. The segment covering 24 to 34 has biased composition (basic and acidic residues); it reads RPYDKKKEEAP. Positions 88–204 form a coiled coil; the sequence is KLQDTLVRQE…TQMEYCRTPC (117 aa). 2 cysteine pairs are disulfide-bonded: Cys208–Cys293 and Cys218–Cys247. In terms of domain architecture, Fibrinogen C-terminal spans 209–465; the sequence is NIPVVSGKEC…KMSMKIRPYF (257 aa). N-linked (GlcNAc...) asparagine glycosylation occurs at Asn371. Cys401 and Cys414 are joined by a disulfide.

Heterohexamer; disulfide linked. Contains 2 sets of 3 non-identical chains (alpha, beta and gamma). The 2 heterotrimers are in head to head conformation with the N-termini in a small central domain. In terms of processing, conversion of fibrinogen to fibrin is triggered by thrombin, which cleaves fibrinopeptides A and B from alpha and beta chains, and thus exposes the N-terminal polymerization sites responsible for the formation of the soft clot. The soft clot is converted into the hard clot by factor XIIIA which catalyzes the epsilon-(gamma-glutamyl)lysine cross-linking between gamma chains (stronger) and between alpha chains (weaker) of different monomers. In terms of tissue distribution, detected in blood plasma (at protein level).

The protein localises to the secreted. Functionally, cleaved by the protease thrombin to yield monomers which, together with fibrinogen alpha (FGA) and fibrinogen gamma (FGG), polymerize to form an insoluble fibrin matrix. Fibrin has a major function in hemostasis as one of the primary components of blood clots. In addition, functions during the early stages of wound repair to stabilize the lesion and guide cell migration during re-epithelialization. Was originally thought to be essential for platelet aggregation, based on in vitro studies using anticoagulated blood. However subsequent studies have shown that it is not absolutely required for thrombus formation in vivo. Enhances expression of SELP in activated platelets. Maternal fibrinogen is essential for successful pregnancy. Fibrin deposition is also associated with infection, where it protects against IFNG-mediated hemorrhage. May also facilitate the antibacterial immune response via both innate and T-cell mediated pathways. This is Fibrinogen beta chain (FGB) from Bos taurus (Bovine).